The sequence spans 367 residues: Putrescine/agmatine-binding protein (367 aa).

The N-terminal stretch at 1–19 is a signal peptide; it reads MKKVCALALSILTTIGATA.

The protein belongs to the bacterial solute-binding protein 1 family.

It localises to the periplasm. Functionally, binds putrescine and agmatine. The chain is Putrescine/agmatine-binding protein from Pseudomonas aeruginosa (strain ATCC 15692 / DSM 22644 / CIP 104116 / JCM 14847 / LMG 12228 / 1C / PRS 101 / PAO1).